The following is a 596-amino-acid chain: Arrestin domain-containing protein C31A2.12 (596 aa).

Residues 194–211 traverse the membrane as a helical segment; it reads AYAIGSYIPIHFVLVPLL. Disordered stretches follow at residues 363-387 and 405-446; these read NLDTPLPSGATTPRRRDSMEPTYAS and QQQP…VITR. Phosphothreonine occurs at positions 373 and 374. Polar residues-rich tracts occupy residues 405-420 and 430-446; these read QQQPQGRSPNEHSPSN and SLGSNPSSGAASAVITR. Phosphoserine occurs at positions 452, 474, 493, and 497. Residues 493–596 are disordered; it reads SRPPSPGIVT…MLPSGFSRRN (104 aa). 2 positions are modified to phosphothreonine: Thr502 and Thr507. Over residues 504-522 the composition is skewed to polar residues; sequence PQRTSPSFFVSPTESTRQS. Ser514 is modified (phosphoserine). The segment covering 531–555 has biased composition (low complexity); the sequence is HSTSSSSGISPSHSSASLAHLSQAS.

The protein belongs to the arrestin family.

The protein localises to the membrane. The chain is Arrestin domain-containing protein C31A2.12 from Schizosaccharomyces pombe (strain 972 / ATCC 24843) (Fission yeast).